The chain runs to 252 residues: 3-dehydroquinate dehydratase (252 aa).

3-dehydroquinate is bound by residues Ser-21, 46-48, and Arg-82; that span reads EWR. The active-site Proton donor/acceptor is His-143. The Schiff-base intermediate with substrate role is filled by Lys-170. Arg-213, Ser-232, and Gln-236 together coordinate 3-dehydroquinate.

This sequence belongs to the type-I 3-dehydroquinase family. In terms of assembly, homodimer.

The catalysed reaction is 3-dehydroquinate = 3-dehydroshikimate + H2O. Its pathway is metabolic intermediate biosynthesis; chorismate biosynthesis; chorismate from D-erythrose 4-phosphate and phosphoenolpyruvate: step 3/7. In terms of biological role, involved in the third step of the chorismate pathway, which leads to the biosynthesis of aromatic amino acids. Catalyzes the cis-dehydration of 3-dehydroquinate (DHQ) and introduces the first double bond of the aromatic ring to yield 3-dehydroshikimate. The polypeptide is 3-dehydroquinate dehydratase (Salmonella agona (strain SL483)).